Reading from the N-terminus, the 331-residue chain is 6-phosphogluconolactonase (331 aa).

N6-acetyllysine is present on Lys287.

Belongs to the cycloisomerase 2 family.

It catalyses the reaction 6-phospho-D-glucono-1,5-lactone + H2O = 6-phospho-D-gluconate + H(+). The protein operates within carbohydrate degradation; pentose phosphate pathway; D-ribulose 5-phosphate from D-glucose 6-phosphate (oxidative stage): step 2/3. Catalyzes the hydrolysis of 6-phosphogluconolactone to 6-phosphogluconate. The chain is 6-phosphogluconolactonase from Shigella sonnei (strain Ss046).